Here is a 245-residue protein sequence, read N- to C-terminus: Ribosomal RNA small subunit methyltransferase G (245 aa).

Residues G85, F90, 108-110 (DST), 136-137 (AE), and R155 each bind S-adenosyl-L-methionine.

Belongs to the methyltransferase superfamily. RNA methyltransferase RsmG family.

It localises to the cytoplasm. Functionally, specifically methylates the N7 position of a guanine in 16S rRNA. This is Ribosomal RNA small subunit methyltransferase G from Nostoc sp. (strain PCC 7120 / SAG 25.82 / UTEX 2576).